The primary structure comprises 356 residues: Protein MGF 360-19R (356 aa).

Residues leucine 61–leucine 93 form an ANK repeat.

Belongs to the asfivirus MGF 360 family.

Plays a role in virus cell tropism, and may be required for efficient virus replication in macrophages. The chain is Protein MGF 360-19R from African swine fever virus (isolate Pig/Kenya/KEN-50/1950) (ASFV).